The sequence spans 595 residues: METYQEKIKQKLTVVPIEPGCYLMKDRNDQIIYVGKAKKLRNRLRSYFTGAHDAKTTRLVGEIRNFEFIVTSSETESLLLELNLIKQYQPRYNILLKDDKSYPFIKITKEKYPRLIVTRTVKKGSGKYFGPYPNAYSAQETKKLLDRIYPFRKCDKMPDKLCLYYHIGQCLGPCVYPVDLEKYAEMTKEITDFLNGEDKTILHNLEQKMQESSESLDFERAKEYRDLIQHIHNLNKKQKITSSDNTIRDVFGYSISKGWMCIQVFFIRQGNMIKRDATMIPLQQTEEEEFYTFIGQFYDLNQHILPKEVHVPKHLNKELIQSVVDTKIVQPLKGKKKDMVDLANHNAEVTLENKFELIAKDESRTVKAIEELGDVMGIQTPIRIEAFDNSNIQGVNPVSAMVSFIDGKPNKKGYRKYKIKTVDGPDDYKSMREVVRRRYTRVLNEGSPLPDLIIVDGGKGHMSGVIDVLENELGLDIPVAGLRKNDKHQTSEILYGEQAEVVPMKKNSQPFYLLQRIQDEVHRFAITFHRQTRQKTGLQSVLDTVDGIGAKRKTKLLRTFGSIKRMKEASVEDLKNSGLPQNVAENLHHALSNNS.

One can recognise a GIY-YIG domain in the interval 17–94 (IEPGCYLMKD…IKQYQPRYNI (78 aa)). In terms of domain architecture, UVR spans 199 to 234 (KTILHNLEQKMQESSESLDFERAKEYRDLIQHIHNL).

This sequence belongs to the UvrC family. Interacts with UvrB in an incision complex.

The protein resides in the cytoplasm. Functionally, the UvrABC repair system catalyzes the recognition and processing of DNA lesions. UvrC both incises the 5' and 3' sides of the lesion. The N-terminal half is responsible for the 3' incision and the C-terminal half is responsible for the 5' incision. In Staphylococcus saprophyticus subsp. saprophyticus (strain ATCC 15305 / DSM 20229 / NCIMB 8711 / NCTC 7292 / S-41), this protein is UvrABC system protein C.